The sequence spans 271 residues: Phosphatidylglycerol--prolipoprotein diacylglyceryl transferase (271 aa).

7 helical membrane-spanning segments follow: residues 25–45, 60–80, 103–123, 134–154, 181–201, 209–229, and 235–255; these read WYGIMYDVALLLALLLAKFFV, YFIWVEIGVILGARLGYILIY, FVGIRGMSYHGAIIGFLIATL, WIFLDLVALSVPLAYVFGRIG, PSQFYEAFLEGIVVFIIVYLA, GELILVYAGAYSLARFICEFY, and GIGFVLWGMSMGQILSFIMFI. An a 1,2-diacyl-sn-glycero-3-phospho-(1'-sn-glycerol)-binding site is contributed by arginine 152.

Belongs to the Lgt family.

Its subcellular location is the cell inner membrane. The enzyme catalyses L-cysteinyl-[prolipoprotein] + a 1,2-diacyl-sn-glycero-3-phospho-(1'-sn-glycerol) = an S-1,2-diacyl-sn-glyceryl-L-cysteinyl-[prolipoprotein] + sn-glycerol 1-phosphate + H(+). Its pathway is protein modification; lipoprotein biosynthesis (diacylglyceryl transfer). In terms of biological role, catalyzes the transfer of the diacylglyceryl group from phosphatidylglycerol to the sulfhydryl group of the N-terminal cysteine of a prolipoprotein, the first step in the formation of mature lipoproteins. This chain is Phosphatidylglycerol--prolipoprotein diacylglyceryl transferase, found in Campylobacter jejuni subsp. doylei (strain ATCC BAA-1458 / RM4099 / 269.97).